A 278-amino-acid chain; its full sequence is Octanoyl-[GcvH]:protein N-octanoyltransferase (278 aa).

The region spanning S44–L249 is the BPL/LPL catalytic domain. Catalysis depends on C148, which acts as the Acyl-thioester intermediate.

This sequence belongs to the octanoyltransferase LipL family.

The enzyme catalyses N(6)-octanoyl-L-lysyl-[glycine-cleavage complex H protein] + L-lysyl-[lipoyl-carrier protein] = N(6)-octanoyl-L-lysyl-[lipoyl-carrier protein] + L-lysyl-[glycine-cleavage complex H protein]. It functions in the pathway protein modification; protein lipoylation via endogenous pathway; protein N(6)-(lipoyl)lysine from octanoyl-[acyl-carrier-protein]. In terms of biological role, catalyzes the amidotransfer (transamidation) of the octanoyl moiety from octanoyl-GcvH to the lipoyl domain of the E2 subunit of lipoate-dependent enzymes. This chain is Octanoyl-[GcvH]:protein N-octanoyltransferase, found in Halalkalibacterium halodurans (strain ATCC BAA-125 / DSM 18197 / FERM 7344 / JCM 9153 / C-125) (Bacillus halodurans).